The following is a 309-amino-acid chain: Glutaminase (309 aa).

Residues Ser-64, Asn-114, Glu-160, Asn-167, Tyr-191, Tyr-243, and Val-261 each contribute to the substrate site.

The protein belongs to the glutaminase family. As to quaternary structure, homotetramer.

It carries out the reaction L-glutamine + H2O = L-glutamate + NH4(+). The protein is Glutaminase of Methylobacterium nodulans (strain LMG 21967 / CNCM I-2342 / ORS 2060).